Here is a 1774-residue protein sequence, read N- to C-terminus: Kinesin-like protein KIF20B (1774 aa).

In terms of domain architecture, Kinesin motor spans Tyr-58–Val-477. Gly-152 to Thr-159 serves as a coordination point for ATP. Ser-486 is modified (phosphoserine). Coiled-coil stretches lie at residues Glu-525 to Glu-601 and Gln-705 to Ala-747. Residues Glu-538–Ser-555 are compositionally biased toward acidic residues. Disordered regions lie at residues Glu-538–Lys-557 and Glu-740–Lys-799. Residues Ser-741–Gln-778 are compositionally biased toward polar residues. Positions Thr-779–Glu-788 are enriched in basic and acidic residues. A coiled-coil region spans residues Ser-824–Arg-946. The residue at position 950 (Ser-950) is a Phosphoserine. The segment at Glu-1002–Ser-1059 is necessary and sufficient for interaction with SHTN1. The stretch at Lys-1021–Ala-1507 forms a coiled coil. Phosphoserine occurs at positions 1107 and 1542. Residues Thr-1514–Lys-1774 form an interaction with PIN1 region. Thr-1598 is modified (phosphothreonine; by CDK1). The residue at position 1612 (Ser-1612) is a Phosphoserine. The tract at residues Lys-1625–Ser-1663 is disordered. The segment covering Val-1638–Lys-1651 has biased composition (basic and acidic residues). Residues Ser-1669 and Ser-1694 each carry the phosphoserine modification.

Belongs to the TRAFAC class myosin-kinesin ATPase superfamily. Kinesin family. As to quaternary structure, oligomerizes (via kinesin motor domain). Associates with microtubules. Interacts (via C-terminal globular tail region) with PIN1 (via WW domain). Interacts with PRC1. Interacts with SHTN1 (via N-terminus); the interaction is direct and promotes the association of SHTN1 to microtubules in primary neurons. Associates with microtubules. Phosphorylated during mitosis by CDK1. Expressed in the brain (at protein level).

It is found in the nucleus. It localises to the cytoplasm. Its subcellular location is the cytoskeleton. The protein resides in the microtubule organizing center. The protein localises to the centrosome. It is found in the nucleolus. It localises to the nucleoplasm. Its subcellular location is the spindle. The protein resides in the spindle pole. The protein localises to the midbody. It is found in the cell projection. It localises to the axon. Its subcellular location is the growth cone. In terms of biological role, plus-end-directed motor enzyme that is required for completion of cytokinesis. Required for proper midbody organization and abscission in polarized cortical stem cells. Plays a role in the regulation of neuronal polarization by mediating the transport of specific cargos. Participates in the mobilization of SHTN1 and in the accumulation of PIP3 in the growth cone of primary hippocampal neurons in a tubulin and actin-dependent manner. In the developing telencephalon, cooperates with SHTN1 to promote both the transition from the multipolar to the bipolar stage and the radial migration of cortical neurons from the ventricular zone toward the superficial layer of the neocortex. Involved in cerebral cortex growth. Acts as an oncogene for promoting bladder cancer cells proliferation, apoptosis inhibition and carcinogenic progression. This is Kinesin-like protein KIF20B from Mus musculus (Mouse).